A 251-amino-acid chain; its full sequence is Ubiquinone/menaquinone biosynthesis C-methyltransferase UbiE (251 aa).

Residues threonine 74, aspartate 95, 123–124 (NA), and serine 140 contribute to the S-adenosyl-L-methionine site.

It belongs to the class I-like SAM-binding methyltransferase superfamily. MenG/UbiE family.

The catalysed reaction is a 2-demethylmenaquinol + S-adenosyl-L-methionine = a menaquinol + S-adenosyl-L-homocysteine + H(+). It carries out the reaction a 2-methoxy-6-(all-trans-polyprenyl)benzene-1,4-diol + S-adenosyl-L-methionine = a 5-methoxy-2-methyl-3-(all-trans-polyprenyl)benzene-1,4-diol + S-adenosyl-L-homocysteine + H(+). The protein operates within quinol/quinone metabolism; menaquinone biosynthesis; menaquinol from 1,4-dihydroxy-2-naphthoate: step 2/2. It participates in cofactor biosynthesis; ubiquinone biosynthesis. Functionally, methyltransferase required for the conversion of demethylmenaquinol (DMKH2) to menaquinol (MKH2) and the conversion of 2-polyprenyl-6-methoxy-1,4-benzoquinol (DDMQH2) to 2-polyprenyl-3-methyl-6-methoxy-1,4-benzoquinol (DMQH2). In Klebsiella pneumoniae subsp. pneumoniae (strain ATCC 700721 / MGH 78578), this protein is Ubiquinone/menaquinone biosynthesis C-methyltransferase UbiE.